Here is a 425-residue protein sequence, read N- to C-terminus: MHKTERGDAMTALQQQDPEIFSLIQQEEVRQHNKIRLIASENYVSSAVLEATGSILTNKYSEGYPGKRYYEGQQLIDQIESIAIDRAKAVFGAEHVNVQPYSGSPANMAVYLAFLKPGDTILGMALPHGGHLTHGSKVSISGKYFNAVSYALNEEGILDYEEIRNKALECKPKILIAGHSAYPRILDFAKFREIADEVGALLMVDMAHFAGLVAGGVHPSPFPYADVVTTTTHKSLRGPRGAMIMCKAEYAKAIDKAVFPGMQGGPHDSTTAAIAVALKEASTDSFKKYTAQVVENAASLADVLIEKGFNLVTGGTENHLMLIDLSNKNITGKQAAKALDAAGIVLNCNSVPFDKRKPFDPSGIRLGTCAITSRGFAKAEMVILGNMMDRVVNNFEDSAVLAEIAQEVQALCDKFPAPGLEHIAK.

Residues Leu-126 and 130–132 (GHL) each bind (6S)-5,6,7,8-tetrahydrofolate. Lys-234 carries the N6-(pyridoxal phosphate)lysine modification.

Belongs to the SHMT family. Homodimer. Requires pyridoxal 5'-phosphate as cofactor.

Its subcellular location is the cytoplasm. It catalyses the reaction (6R)-5,10-methylene-5,6,7,8-tetrahydrofolate + glycine + H2O = (6S)-5,6,7,8-tetrahydrofolate + L-serine. It functions in the pathway one-carbon metabolism; tetrahydrofolate interconversion. The protein operates within amino-acid biosynthesis; glycine biosynthesis; glycine from L-serine: step 1/1. Catalyzes the reversible interconversion of serine and glycine with tetrahydrofolate (THF) serving as the one-carbon carrier. This reaction serves as the major source of one-carbon groups required for the biosynthesis of purines, thymidylate, methionine, and other important biomolecules. Also exhibits THF-independent aldolase activity toward beta-hydroxyamino acids, producing glycine and aldehydes, via a retro-aldol mechanism. This is Serine hydroxymethyltransferase from Desulfotalea psychrophila (strain LSv54 / DSM 12343).